Here is a 67-residue protein sequence, read N- to C-terminus: Conotoxin Cl6.6b (67 aa).

An N-terminal signal peptide occupies residues 1 to 24 (MKLTCVLIAAVLLLAVCQLDSADA). Residues 25-37 (TGYMRKNPSLRSP) constitute a propeptide that is removed on maturation. Intrachain disulfides connect Cys-43-Cys-57, Cys-50-Cys-61, and Cys-56-Cys-65.

It belongs to the conotoxin O1 superfamily. Expressed by the venom duct.

The protein resides in the secreted. This is Conotoxin Cl6.6b from Californiconus californicus (California cone).